A 356-amino-acid polypeptide reads, in one-letter code: NADH dehydrogenase (ubiquinone) complex I, assembly factor 6 homolog (356 aa).

The N-terminal 41 residues, 1-41 (MIRNSGRILFNSLKNSNVKLINRNVIINSNIRLFSTSTNNT), are a transit peptide targeting the mitochondrion.

The protein belongs to the NDUFAF6 family.

Its subcellular location is the mitochondrion inner membrane. Its function is as follows. Involved in the assembly of mitochondrial NADH:ubiquinone oxidoreductase complex (complex I) at early stages. The sequence is that of NADH dehydrogenase (ubiquinone) complex I, assembly factor 6 homolog from Dictyostelium discoideum (Social amoeba).